We begin with the raw amino-acid sequence, 607 residues long: Coronin-like protein cor-1 (607 aa).

WD repeat units lie at residues 77–117, 127–167, and 170–209; these read AHKA…LNRN, GHQK…ALLE, and GHPDQIWSINFNFDGSQFVTTCKDKKIRILDSHTGEVVHE. The tract at residues 415-564 is disordered; sequence PTAAESVPTQ…VSAASDVGHV (150 aa). Over residues 424–436 the composition is skewed to low complexity; it reads QSYSERPPSSQQP. A compositionally biased stretch (pro residues) spans 437-447; it reads SPRPSASPRPR. Basic and acidic residues-rich tracts occupy residues 473–489 and 517–533; these read SRTEIPPKEESKVDPMK and AAAELERIKRDQSRTAD. A compositionally biased stretch (low complexity) spans 544 to 559; the sequence is SSRASASPRGSVSAAS. The stretch at 563-602 forms a coiled coil; that stretch reads HVPQNMDELLEDLMKMKAVLRQHERRIRMLEEEIADRNMS.

This sequence belongs to the WD repeat coronin family.

It is found in the cytoplasm. Its subcellular location is the cytoskeleton. Functionally, required to direct the migration of Q neuroblasts along the anterior axis of the body during larval development. This is dependent on its asymmetric expression in Q neuroblasts. In Caenorhabditis elegans, this protein is Coronin-like protein cor-1 (cor-1).